A 42-amino-acid polypeptide reads, in one-letter code: uncharacterized protein (42 aa).

Residues F5–I27 traverse the membrane as a helical segment.

The protein resides in the membrane. This is an uncharacterized protein from Saccharomyces cerevisiae (strain ATCC 204508 / S288c) (Baker's yeast).